Here is a 145-residue protein sequence, read N- to C-terminus: 3-hydroxyacyl-[acyl-carrier-protein] dehydratase FabZ (145 aa).

The active site involves His-48.

It belongs to the thioester dehydratase family. FabZ subfamily.

It localises to the cytoplasm. The catalysed reaction is a (3R)-hydroxyacyl-[ACP] = a (2E)-enoyl-[ACP] + H2O. Its function is as follows. Involved in unsaturated fatty acids biosynthesis. Catalyzes the dehydration of short chain beta-hydroxyacyl-ACPs and long chain saturated and unsaturated beta-hydroxyacyl-ACPs. In Marinomonas sp. (strain MWYL1), this protein is 3-hydroxyacyl-[acyl-carrier-protein] dehydratase FabZ.